A 386-amino-acid chain; its full sequence is MATKRDYYEVLGVDKGASDDEIKKAYRKLSKKYHPDVNQEADAEEKFKKFQKPMNTLSDPQKRAAYDQYGHAGADANFGGGGAGGFGGFGGGFSDAGGFGGFEDIFESFFGGGRSADPNAPRQGDDLQYSINLTFEEAVFGKDTEVSYKRNEVCHTCGGNGAKPGTQPETCHKCKGSGTINAERQTPLGRVMTRQTCDVCHGTGKEIKEVCETCHGTGHEKKTHSVNVSVPAGVEDGQQMRLANQGEAGTNGGPYGDLYVVLYCSHETCNIFDRDGSEIYYELPINFVQAALGDEVDVPTVHGNVKLKIPAGTQTSTKFRLRGKGAPRLRGNSTGDQQVTVKIITPKNLNEEQREALRNFAELTGQSTEEQQSEGFFDKMKDAFKK.

In terms of domain architecture, J spans 6 to 70 (DYYEVLGVDK…QKRAAYDQYG (65 aa)). The segment at 141–223 (GKDTEVSYKR…CHGTGHEKKT (83 aa)) adopts a CR-type zinc-finger fold. Residues C154, C157, C171, C174, C197, C200, C211, and C214 each coordinate Zn(2+). 4 CXXCXGXG motif repeats span residues 154-161 (CHTCGGNG), 171-178 (CHKCKGSG), 197-204 (CDVCHGTG), and 211-218 (CETCHGTG). Residues 363 to 386 (LTGQSTEEQQSEGFFDKMKDAFKK) form a disordered region. The segment covering 364 to 374 (TGQSTEEQQSE) has biased composition (polar residues). Positions 376–386 (FFDKMKDAFKK) are enriched in basic and acidic residues.

It belongs to the DnaJ family. Homodimer. Zn(2+) is required as a cofactor.

The protein localises to the cytoplasm. Functionally, participates actively in the response to hyperosmotic and heat shock by preventing the aggregation of stress-denatured proteins and by disaggregating proteins, also in an autonomous, DnaK-independent fashion. Unfolded proteins bind initially to DnaJ; upon interaction with the DnaJ-bound protein, DnaK hydrolyzes its bound ATP, resulting in the formation of a stable complex. GrpE releases ADP from DnaK; ATP binding to DnaK triggers the release of the substrate protein, thus completing the reaction cycle. Several rounds of ATP-dependent interactions between DnaJ, DnaK and GrpE are required for fully efficient folding. Also involved, together with DnaK and GrpE, in the DNA replication of plasmids through activation of initiation proteins. This chain is Chaperone protein DnaJ, found in Tetragenococcus halophilus (Pediococcus halophilus).